The primary structure comprises 328 residues: GMP reductase (328 aa).

The active-site Thioimidate intermediate is Cys176. 205–228 (IIADGGIRTHGDVAKSIRFGATMV) is a binding site for NADP(+).

It belongs to the IMPDH/GMPR family. GuaC type 2 subfamily.

It carries out the reaction IMP + NH4(+) + NADP(+) = GMP + NADPH + 2 H(+). In terms of biological role, catalyzes the irreversible NADPH-dependent deamination of GMP to IMP. It functions in the conversion of nucleobase, nucleoside and nucleotide derivatives of G to A nucleotides, and in maintaining the intracellular balance of A and G nucleotides. This chain is GMP reductase, found in Bacillus thuringiensis (strain Al Hakam).